A 114-amino-acid polypeptide reads, in one-letter code: Gas vesicle protein J1 (114 aa).

The alpha helix 1 stretch occupies residues 13–22 (LAEMLEMLLD). 2 beta-strand regions span residues 25–35 (VVVNADIAVSV) and 40–50 (LLGIELRAAIA). The Conserved in GvpM1/2 but not GvpA signature appears at 46-50 (RAAIA). Alpha helix regions lie at residues 52-72 (FETA…ERVE), 78-87 (SPDQSDPASE), and 95-105 (TNPLSDDSTPT). Residues 63 to 114 (PTGTDMERVESAANISPDQSDPASETQSETESTNPLSDDSTPTASTSAEETK) form a disordered region. Residues 75-98 (ANISPDQSDPASETQSETESTNPL) are compositionally biased toward polar residues. Residues 99-114 (SDDSTPTASTSAEETK) are compositionally biased toward low complexity.

It belongs to the gas vesicle GvpA family. In terms of assembly, gvpF to GvpM interact with each other in vitro, and may form multi-subunit complex(es). Interacts with GvpA1.

The protein localises to the gas vesicle. Its function is as follows. Proteins GvpF to GvpM might be involved in nucleating gas vesicle formation. Mutagenesis of residues 13-61 shows that almost none of them can be substituted and still make gas vesicles. A minor component of the gas vesicle. Gas vesicles are hollow, gas filled proteinaceous nanostructures found in several microbial planktonic microorganisms. They allow positioning of halobacteria at the optimal depth for growth in the poorly aerated, shallow brine pools of their habitat. Expression of a 9.5 kb p-vac DNA fragment containing 2 divergently transcribed regions (gvpD-gvpE-gvpF-gvpG-gvpH-gvpI-gvpJ-gvpK-gvpL-gvpM and gvpA-gvpC-gvpN-gvpO) allows H.volcanii to produce gas vesicles. All site-directed mutagenesis is tested in H.volcanii. A minimal gas vesicle can be made in H.volcanii by gvpA1-gvpO1 plus gvpF1-gvpG1-gvpJ1-gvpK1-gvpL1-gvpM1; lack of enough GvpJ1 prevents formation. A similar region restores gas vesicle production in H.halobium without the p-vac locus, but it still has the c-vac locus. The chain is Gas vesicle protein J1 (gvpJ11) from Halobacterium salinarum (strain ATCC 700922 / JCM 11081 / NRC-1) (Halobacterium halobium).